The chain runs to 325 residues: N-acetyl-gamma-glutamyl-phosphate reductase (325 aa).

The active site involves C135.

Belongs to the NAGSA dehydrogenase family. Type 1 subfamily.

It is found in the cytoplasm. It carries out the reaction N-acetyl-L-glutamate 5-semialdehyde + phosphate + NADP(+) = N-acetyl-L-glutamyl 5-phosphate + NADPH + H(+). It participates in amino-acid biosynthesis; L-arginine biosynthesis; N(2)-acetyl-L-ornithine from L-glutamate: step 3/4. Its function is as follows. Catalyzes the NADPH-dependent reduction of N-acetyl-5-glutamyl phosphate to yield N-acetyl-L-glutamate 5-semialdehyde. This Karelsulcia muelleri (strain GWSS) (Sulcia muelleri) protein is N-acetyl-gamma-glutamyl-phosphate reductase.